The following is a 1081-amino-acid chain: FHF complex subunit HOOK-interacting protein 1A (1081 aa).

4 disordered regions span residues 474–496 (SEEQ…PPPA), 544–623 (PETF…DPPK), 658–770 (EKDT…ENEP), and 863–883 (EAGS…RHPV). A compositionally biased stretch (pro residues) spans 486–496 (PSSPSPPPPPA). Residues 553–564 (EESRENSGHPEA) are compositionally biased toward basic and acidic residues. Positions 567–576 (PQQSVRTSGQ) are enriched in polar residues. Positions 680–707 (EPLEDTSEQQEDTSEQLEDTSELQEDTA) are enriched in acidic residues. 2 stretches are compositionally biased toward polar residues: residues 727-738 (EAQSLPTSNGPL) and 746-762 (ESQP…NTFS).

The protein belongs to the FHIP family. May be a component of the FTS/Hook/FHIP complex (FHF complex), composed of AKTIP/FTS, FHIP1B, and one or more members of the Hook family of proteins HOOK1, HOOK2, and HOOK3. May interact directly with AKTIP/FTS.

In terms of biological role, probable component of the FTS/Hook/FHIP complex (FHF complex). FHF complex promotes the distribution of AP-4 complex to the perinuclear area of the cell. This Mus musculus (Mouse) protein is FHF complex subunit HOOK-interacting protein 1A.